The primary structure comprises 530 residues: UDP-glucuronosyltransferase 2B7 (530 aa).

The first 17 residues, 1 to 17, serve as a signal peptide directing secretion; it reads MPQKWISALLLLQISFC. Asparagine 316 carries an N-linked (GlcNAc...) asparagine glycan. Residues 374–380 and glutamate 400 contribute to the UDP-alpha-D-glucuronate site; that span reads THGGANG. Residues 496 to 516 traverse the membrane as a helical segment; it reads IGFLLACVLAIVLLAVKCCLF.

Belongs to the UDP-glycosyltransferase family.

It localises to the endoplasmic reticulum membrane. It carries out the reaction glucuronate acceptor + UDP-alpha-D-glucuronate = acceptor beta-D-glucuronoside + UDP + H(+). The catalysed reaction is 17alpha-estradiol + UDP-alpha-D-glucuronate = 17alpha-estradiol 17-O-(beta-D-glucuronate) + UDP + H(+). It catalyses the reaction 17beta-estradiol + UDP-alpha-D-glucuronate = 17beta-estradiol 17-O-(beta-D-glucuronate) + UDP + H(+). The enzyme catalyses 2-hydroxy-17beta-estradiol + UDP-alpha-D-glucuronate = 2-hydroxy-17beta-estradiol 3-O-(beta-D-glucuronate) + UDP + H(+). It carries out the reaction 4-hydroxy-17beta-estradiol + UDP-alpha-D-glucuronate = 17beta-estradiol 4-O-(beta-D-glucuronate) + UDP + H(+). The catalysed reaction is 4-hydroxyestrone + UDP-alpha-D-glucuronate = estrone 4-O-(beta-D-glucuronate) + UDP + H(+). It catalyses the reaction 16alpha-hydroxyestrone + UDP-alpha-D-glucuronate = 16alpha-hydroxyestrone 16-O-(beta-D-glucuronate) + UDP + H(+). The enzyme catalyses 16alpha,17beta-estriol + UDP-alpha-D-glucuronate = 16alpha,17beta-estriol 16-O-(beta-D-glucuronate) + UDP + H(+). It carries out the reaction 16beta,17beta-estriol + UDP-alpha-D-glucuronate = 16beta,17beta-estriol 16-O-(beta-D-glucuronate) + UDP + H(+). The catalysed reaction is 16alpha,17alpha-estriol + UDP-alpha-D-glucuronate = 16alpha,17alpha-estriol 16-O-(beta-D-glucuronate) + UDP + H(+). It catalyses the reaction 16alpha,17alpha-estriol + UDP-alpha-D-glucuronate = 16alpha,17alpha-estriol 17-O-(beta-D-glucuronate) + UDP + H(+). The enzyme catalyses epitestosterone + UDP-alpha-D-glucuronate = epitestosterone 17-O-(beta-D-glucuronate) + UDP + H(+). It carries out the reaction hyodeoxycholate + UDP-alpha-D-glucuronate = hyodeoxycholate 6-O-(beta-D-glucuronate) + UDP + H(+). The catalysed reaction is hyocholate + UDP-alpha-D-glucuronate = hyocholate 6-O-(beta-D-glucuronate) + UDP + H(+). It catalyses the reaction all-trans-retinoate + UDP-alpha-D-glucuronate = all-trans-retinoyl-1-O-(beta-D-glucuronate) + UDP. The enzyme catalyses all-trans-4-hydroxyretinoate + UDP-alpha-D-glucuronate = all-trans-4-hydroxy-4-O-(beta-D-glucuronide)-retinoate + UDP + H(+). It carries out the reaction (E)-ferulate + UDP-alpha-D-glucuronate = (E)-ferulic acid beta-D-glucuronate ester + UDP. The catalysed reaction is 8-iso-prostaglandin F2alpha + UDP-alpha-D-glucuronate = 8-iso-prostaglandin F2alpha-glucuronide + UDP + H(+). It catalyses the reaction 5-epi-5-F2t-IsoP + UDP-alpha-D-glucuronate = 5-epi-5-F2t-IsoP-glucuronide + UDP + H(+). The enzyme catalyses (5Z,8Z,11Z,14Z)-eicosatetraenoate + UDP-alpha-D-glucuronate = O-[(5Z),(8Z),(11Z),(14Z)-eicosatetraenoyl]-beta-D-glucuronate + UDP. It carries out the reaction 15-hydroxy-(5Z,8Z,11Z,13E)-eicosatetraenoate + UDP-alpha-D-glucuronate = 15-O-(beta-D-glucuronosyl)-(5Z,8Z,11Z,14Z)-eicosatetraenoate + UDP + H(+). The catalysed reaction is 20-hydroxy-(5Z,8Z,11Z,14Z)-eicosatetraenoate + UDP-alpha-D-glucuronate = 20-O-(beta-D-glucuronosyl)-(5Z,8Z,11Z,14Z)-eicosatetraenoate + UDP + H(+). It catalyses the reaction (E)-ferulate + UDP-alpha-D-glucuronate = (E)-4-O-(beta-D-glucuronosyl)-ferulate + UDP + H(+). The enzyme catalyses prostaglandin B1 + UDP-alpha-D-glucuronate = 15-O-(beta-D-glucuronosyl)-prostaglandin B1 + UDP + H(+). It carries out the reaction mycophenolate + UDP-alpha-D-glucuronate = mycophenolic acid O-acyl-beta-D-glucuronide + UDP. The catalysed reaction is losartan + UDP-alpha-D-glucuronate = losartan-2-N-beta-D-glucuronide + UDP. It catalyses the reaction candesartan + UDP-alpha-D-glucuronate = candesartan O-beta-D-glucuronoside + UDP. The enzyme catalyses candesartan + UDP-alpha-D-glucuronate = candesartan-2-N-beta-D-glucuronide + UDP. It carries out the reaction zolasartan + UDP-alpha-D-glucuronate = zolarsartan O-beta-D-glucuronoside + UDP. UDP-glucuronosyltransferase (UGT) that catalyzes phase II biotransformation reactions in which lipophilic substrates are conjugated with glucuronic acid to increase the metabolite's water solubility, thereby facilitating excretion into either the urine or bile. Essential for the elimination and detoxification of drugs, xenobiotics and endogenous compounds. Catalyzes the glucuronidation of endogenous steroid hormones such as androgens (epitestosterone, androsterone) and estrogens (estradiol, epiestradiol, estriol, catechol estrogens). Also regulates the levels of retinoic acid, a major metabolite of vitamin A involved in apoptosis, cellular growth and differentiation, and embryonic development. Contributes to bile acid (BA) detoxification by catalyzing the glucuronidation of BA substrates, which are natural detergents for dietary lipids absorption. Involved in the glucuronidation of arachidonic acid (AA) and AA-derived eicosanoids including 15-HETE, 20-HETE, PGE2, PGB1 and F2-isoprostanes (8-iso-PGF2alpha and 5-epi-5-F2t-IsoP). Involved in the glucuronidation of the phytochemical ferulic acid at the phenolic or the carboxylic acid group. Involved in the glucuronidation of the AGTR1 angiotensin receptor antagonist losartan, caderastan and zolarsatan, drugs which can inhibit the effect of angiotensin II. Also metabolizes mycophenolate, an immunosuppressive agent. This Rattus norvegicus (Rat) protein is UDP-glucuronosyltransferase 2B7.